A 169-amino-acid chain; its full sequence is Lipoprotein signal peptidase (169 aa).

4 consecutive transmembrane segments (helical) span residues 10–30 (LPWL…KAFF), 40–60 (IVVI…AAFS), 68–88 (WQRW…VVWL), and 94–114 (GETW…GNLY). Residues Asp-124 and Asp-143 contribute to the active site. Residues 135–155 (YFPAFNLADSAITVGAVMLAL) traverse the membrane as a helical segment.

The protein belongs to the peptidase A8 family.

The protein localises to the cell inner membrane. The catalysed reaction is Release of signal peptides from bacterial membrane prolipoproteins. Hydrolyzes -Xaa-Yaa-Zaa-|-(S,diacylglyceryl)Cys-, in which Xaa is hydrophobic (preferably Leu), and Yaa (Ala or Ser) and Zaa (Gly or Ala) have small, neutral side chains.. It functions in the pathway protein modification; lipoprotein biosynthesis (signal peptide cleavage). This protein specifically catalyzes the removal of signal peptides from prolipoproteins. In Pseudomonas aeruginosa (strain UCBPP-PA14), this protein is Lipoprotein signal peptidase.